The chain runs to 173 residues: Alpha-crystallin A chain (173 aa).

Methionine 1 is modified (N-acetylmethionine). The tract at residues 1–63 is required for complex formation with BFSP1 and BFSP2; sequence MDIAIQHPWF…RSVLDSGISE (63 aa). Position 6 is a deamidated glutamine; partial (glutamine 6). Serine 45 is subject to Phosphoserine. Deamidated glutamine; partial is present on glutamine 50. Residues 52–162 form the sHSP domain; that stretch reads VFRSVLDSGI…GHSERAIPVS (111 aa). 2 positions are modified to N6-acetyllysine: lysine 70 and lysine 99. Histidine 100 serves as a coordination point for Zn(2+). Residue asparagine 101 is modified to Deamidated asparagine; partial. Zn(2+) contacts are provided by glutamate 102 and histidine 107. Serine 122 is subject to Phosphoserine. Deamidated asparagine; partial is present on asparagine 123. Residues 144-173 are disordered; the sequence is PKVPSGVDAGHSERAIPVSREEKPSSAPSS. Residues 153–167 show a composition bias toward basic and acidic residues; that stretch reads GHSERAIPVSREEKP. Histidine 154 is a binding site for Zn(2+). Serine 162 carries an O-linked (GlcNAc) serine glycan.

Belongs to the small heat shock protein (HSP20) family. In terms of assembly, heteromer composed of three CRYAA and one CRYAB subunits. Inter-subunit bridging via zinc ions enhances stability, which is crucial as there is no protein turn over in the lens. Can also form homodimers and homotetramers (dimers of dimers) which serve as the building blocks of homooligomers. Within homooligomers, the zinc-binding motif is created from residues of 3 different molecules. His-100 and Glu-102 from one molecule are ligands of the zinc ion, and His-107 and His-154 residues from additional molecules complete the site with tetrahedral coordination geometry. Part of a complex required for lens intermediate filament formation composed of BFSP1, BFSP2 and CRYAA. In terms of processing, acetylation at Lys-70 may increase chaperone activity. Post-translationally, undergoes age-dependent proteolytical cleavage at the C-terminus.

Its subcellular location is the cytoplasm. It is found in the nucleus. In terms of biological role, contributes to the transparency and refractive index of the lens. Acts as a chaperone, preventing aggregation of various proteins under a wide range of stress conditions. Required for the correct formation of lens intermediate filaments as part of a complex composed of BFSP1, BFSP2 and CRYAA. In Halichoerus grypus (Gray seal), this protein is Alpha-crystallin A chain (CRYAA).